The primary structure comprises 85 residues: UPF0386 protein VF_0869 (85 aa).

This sequence belongs to the UPF0386 family.

The sequence is that of UPF0386 protein VF_0869 from Aliivibrio fischeri (strain ATCC 700601 / ES114) (Vibrio fischeri).